The primary structure comprises 175 residues: Large ribosomal subunit protein uL10 (175 aa).

The protein belongs to the universal ribosomal protein uL10 family. As to quaternary structure, part of the ribosomal stalk of the 50S ribosomal subunit. The N-terminus interacts with L11 and the large rRNA to form the base of the stalk. The C-terminus forms an elongated spine to which L12 dimers bind in a sequential fashion forming a multimeric L10(L12)X complex.

Forms part of the ribosomal stalk, playing a central role in the interaction of the ribosome with GTP-bound translation factors. The sequence is that of Large ribosomal subunit protein uL10 from Prochlorococcus marinus subsp. pastoris (strain CCMP1986 / NIES-2087 / MED4).